A 1347-amino-acid polypeptide reads, in one-letter code: Protocadherin-11 X-linked (1347 aa).

The N-terminal stretch at 1-23 (MDLLSGTYIFAVLLACVVFHSGA) is a signal peptide. Residues 24–812 (QEKNYTIREE…VSSPTSDYVK (789 aa)) lie on the Extracellular side of the membrane. Cadherin domains lie at 26–139 (KNYT…APLF), 140–249 (PATV…HPVF), 250–355 (KETE…VPSI), 362–466 (NPIN…APVF), 467–570 (TQSF…SPVF), 571–673 (THNE…KPVF), and 677–795 (PSNY…APVT). Residues Asn-27, Asn-48, and Asn-54 are each glycosylated (N-linked (GlcNAc...) asparagine). N-linked (GlcNAc...) asparagine glycosylation is present at Asn-344. N-linked (GlcNAc...) asparagine glycosylation occurs at Asn-553. Residue Asn-773 is glycosylated (N-linked (GlcNAc...) asparagine). A helical membrane pass occupies residues 813-833 (ILVAAVAGTVTVVVVIFITAV). The Cytoplasmic portion of the chain corresponds to 834–1347 (VRCRQAPHLK…DSPIMEEHPL (514 aa)). 4 disordered regions span residues 1031-1050 (IWIH…GKSQ), 1057-1091 (LPEG…GYPQ), 1097-1116 (RATP…ESTF), and 1325-1347 (TFTP…EHPL).

The protein resides in the cell membrane. Potential calcium-dependent cell-adhesion protein. The protein is Protocadherin-11 X-linked (PCDH11X) of Pongo pygmaeus (Bornean orangutan).